The sequence spans 748 residues: Spidroin-1 (748 aa).

25 consecutive repeat copies span residues 1–25, 26–38, 39–66, 67–96, 97–130, 131–158, 159–191, 192–204, 205–235, 236–262, 263–292, 293–305, 306–333, 334–360, 361–394, 395–424, 425–458, 459–485, 486–512, 513–525, 526–555, 556–582, 583–612, 613–642, and 643–655. Residues 1 to 655 are 25 X approximate tandem repeats; that stretch reads QGAGAAAAAA…ASAAASRLSS (655 aa).

It belongs to the silk fibroin family. In terms of assembly, major subunit, with spidroin 2, of the dragline silk.

Its subcellular location is the secreted. It localises to the extracellular space. Spiders' major ampullate silk possesses unique characteristics of strength and elasticity. Fibroin consists of pseudocrystalline regions of antiparallel beta-sheet interspersed with elastic amorphous segments. This is Spidroin-1 from Trichonephila clavipes (Golden silk orbweaver).